The sequence spans 554 residues: 3-(3-hydroxy-phenyl)propionate/3-hydroxycinnamic acid hydroxylase (554 aa).

FAD-binding positions include 17–46 (QVAI…VVEK) and 285–295 (FRIDRVLLAGD).

It belongs to the PheA/TfdB FAD monooxygenase family. FAD serves as cofactor.

It carries out the reaction 3-(3-hydroxyphenyl)propanoate + NADH + O2 + H(+) = 3-(2,3-dihydroxyphenyl)propanoate + NAD(+) + H2O. The enzyme catalyses (2E)-3-(3-hydroxyphenyl)prop-2-enoate + NADH + O2 + H(+) = (2E)-3-(2,3-dihydroxyphenyl)prop-2-enoate + NAD(+) + H2O. The protein operates within aromatic compound metabolism; 3-phenylpropanoate degradation. Its function is as follows. Catalyzes the insertion of one atom of molecular oxygen into position 2 of the phenyl ring of 3-(3-hydroxyphenyl)propionate (3-HPP) and hydroxycinnamic acid (3HCI). In Escherichia coli O17:K52:H18 (strain UMN026 / ExPEC), this protein is 3-(3-hydroxy-phenyl)propionate/3-hydroxycinnamic acid hydroxylase.